The chain runs to 219 residues: Non-specific lipid transfer protein GPI-anchored 25 (219 aa).

A signal peptide spans 1 to 22; it reads MATKITGVFILILTITFSSSSA. Cystine bridges form between Cys39–Cys85, Cys49–Cys68, Cys69–Cys110, and Cys83–Cys123. A glycan (N-linked (GlcNAc...) asparagine) is linked at Asn59. Asn148 carries an N-linked (GlcNAc...) asparagine glycan. The interval 152-181 is disordered; it reads SPQSVDLAPEVSPSSDLFSPETATLAPPPP. The GPI-anchor amidated serine moiety is linked to residue Ser192. The propeptide at 193-219 is removed in mature form; the sequence is SDSLKIRNFWFPSTIIMTFATSILARI.

Belongs to the plant LTP family.

The protein resides in the cell membrane. Its function is as follows. Probable lipid transfer protein. This Arabidopsis thaliana (Mouse-ear cress) protein is Non-specific lipid transfer protein GPI-anchored 25.